We begin with the raw amino-acid sequence, 126 residues long: Nuclear transport factor 2B (126 aa).

An N-acetylserine modification is found at Ser-2. The NTF2 domain occupies 9-123 (VSKAFVEHYY…FYVFNDIFRL (115 aa)).

As to quaternary structure, interacts with RAN1. Expressed in roots, stems, leaves and flowers, and, at low levels, in siliques.

The protein resides in the cytoplasm. The protein localises to the nucleus. It localises to the nucleus envelope. In terms of biological role, facilitates protein transport into the nucleus. Interacts with various nucleoporins and with Ran-GDP. Could be part of a multicomponent system of cytosolic factors that assemble at the pore complex during nuclear import. This is Nuclear transport factor 2B from Arabidopsis thaliana (Mouse-ear cress).